Reading from the N-terminus, the 402-residue chain is Argininosuccinate synthase (402 aa).

Residues 10–18 and Ala-38 each bind ATP; that span reads AYSGGVDTS. An L-citrulline-binding site is contributed by Tyr-89. Gly-119 is a binding site for ATP. L-aspartate is bound by residues Thr-121, Asn-125, and Asp-126. Position 125 (Asn-125) interacts with L-citrulline. Residues Arg-129, Ser-177, Ser-186, Glu-262, and Tyr-274 each coordinate L-citrulline.

The protein belongs to the argininosuccinate synthase family. Type 1 subfamily. In terms of assembly, homotetramer.

Its subcellular location is the cytoplasm. It catalyses the reaction L-citrulline + L-aspartate + ATP = 2-(N(omega)-L-arginino)succinate + AMP + diphosphate + H(+). It participates in amino-acid biosynthesis; L-arginine biosynthesis; L-arginine from L-ornithine and carbamoyl phosphate: step 2/3. The chain is Argininosuccinate synthase from Prochlorococcus marinus (strain SARG / CCMP1375 / SS120).